The sequence spans 1170 residues: NPC intracellular sterol transporter 1-related protein 1 (1170 aa).

The N-terminal stretch at 1–19 (MNVLWIIALVGQLMRLVQG) is a signal peptide. 8 cysteine pairs are disulfide-bonded: cysteine 23/cysteine 75, cysteine 29/cysteine 41, cysteine 64/cysteine 110, cysteine 76/cysteine 114, cysteine 98/cysteine 230, cysteine 101/cysteine 156, cysteine 223/cysteine 235, and cysteine 232/cysteine 239. N-linked (GlcNAc...) asparagine glycans are attached at residues asparagine 123, asparagine 145, and asparagine 178. The chain crosses the membrane as a helical span at residues 260-280 (LSVLIFYTICALFAFMWYYLC). The N-linked (GlcNAc...) asparagine glycan is linked to asparagine 314. The chain crosses the membrane as a helical span at residues 341–361 (ILITTVFSIFVFSFIIFQYAT). Asparagine 401 carries an N-linked (GlcNAc...) asparagine glycan. Cystine bridges form between cysteine 438–cysteine 447 and cysteine 473–cysteine 480. Residue asparagine 513 is glycosylated (N-linked (GlcNAc...) asparagine). A run of 6 helical transmembrane segments spans residues 556-576 (NDIS…TWAL), 585-605 (LLLG…AAGF), 616-636 (IIAE…IFLI), 667-687 (ILMS…VTMP), 698-718 (VSVI…LSLY), and 752-772 (IIII…EIQF). In terms of domain architecture, SSD spans 557 to 717 (DISTVAISYL…LTAYVSILSL (161 aa)). Cystine bridges form between cysteine 822-cysteine 828, cysteine 868-cysteine 925, cysteine 869-cysteine 891, and cysteine 879-cysteine 888. Asparagine 900 and asparagine 940 each carry an N-linked (GlcNAc...) asparagine glycan. The next 5 helical transmembrane spans lie at 1000-1020 (LTLK…SVFL), 1027-1047 (FLLA…MALL), 1054-1074 (VSLV…VHIV), 1099-1119 (IGES…CVLA), and 1133-1153 (MWFT…PALL).

It belongs to the patched family.

The protein localises to the vacuole membrane. In terms of biological role, involved in sphingolipid trafficking. May recycle sphingolipids between cellular membranous compartments. This Saccharomyces cerevisiae (strain ATCC 204508 / S288c) (Baker's yeast) protein is NPC intracellular sterol transporter 1-related protein 1.